The sequence spans 407 residues: 1-deoxy-D-xylulose 5-phosphate reductoisomerase (407 aa).

Positions 25, 26, 27, 28, 53, and 136 each coordinate NADPH. K137 is a 1-deoxy-D-xylulose 5-phosphate binding site. Residue E138 coordinates NADPH. D162 is a Mn(2+) binding site. 4 residues coordinate 1-deoxy-D-xylulose 5-phosphate: S163, E164, S188, and H211. E164 lines the Mn(2+) pocket. Position 217 (G217) interacts with NADPH. 1-deoxy-D-xylulose 5-phosphate is bound by residues S224, N229, K230, and E233. Mn(2+) is bound at residue E233.

The protein belongs to the DXR family. Mg(2+) is required as a cofactor. Mn(2+) serves as cofactor.

The catalysed reaction is 2-C-methyl-D-erythritol 4-phosphate + NADP(+) = 1-deoxy-D-xylulose 5-phosphate + NADPH + H(+). It participates in isoprenoid biosynthesis; isopentenyl diphosphate biosynthesis via DXP pathway; isopentenyl diphosphate from 1-deoxy-D-xylulose 5-phosphate: step 1/6. Its function is as follows. Catalyzes the NADPH-dependent rearrangement and reduction of 1-deoxy-D-xylulose-5-phosphate (DXP) to 2-C-methyl-D-erythritol 4-phosphate (MEP). The protein is 1-deoxy-D-xylulose 5-phosphate reductoisomerase of Rhodopseudomonas palustris (strain BisA53).